The chain runs to 340 residues: L-threonine 3-dehydrogenase (340 aa).

Cys38 is a Zn(2+) binding site. Residues Thr40 and His43 each act as charge relay system in the active site. Residues His63, Glu64, Cys93, Cys96, Cys99, and Cys107 each contribute to the Zn(2+) site. Residues Ile175, Asp195, Arg200, 261-263 (LGI), and 285-286 (IY) contribute to the NAD(+) site.

It belongs to the zinc-containing alcohol dehydrogenase family. In terms of assembly, homotetramer. It depends on Zn(2+) as a cofactor.

It localises to the cytoplasm. The enzyme catalyses L-threonine + NAD(+) = (2S)-2-amino-3-oxobutanoate + NADH + H(+). Its pathway is amino-acid degradation; L-threonine degradation via oxydo-reductase pathway; glycine from L-threonine: step 1/2. Catalyzes the NAD(+)-dependent oxidation of L-threonine to 2-amino-3-ketobutyrate. The sequence is that of L-threonine 3-dehydrogenase from Xanthomonas campestris pv. campestris (strain ATCC 33913 / DSM 3586 / NCPPB 528 / LMG 568 / P 25).